Here is a 497-residue protein sequence, read N- to C-terminus: Iron-sulfur cluster assembly factor IBA57, mitochondrial (497 aa).

The N-terminal 27 residues, 1–27 (MFISRRCRIKGFTLKNLLWFRSSSTRF), are a transit peptide targeting the mitochondrion. The tract at residues 414 to 433 (PTLNPFTNKPPERTKRKQRP) is disordered.

This sequence belongs to the GcvT family. CAF17/IBA57 subfamily. Interacts with CCR4, ISA1 and ISA2.

Its subcellular location is the mitochondrion matrix. Functionally, required for lysine and glutamate prototrophy and mitochondrial genome maintenance. Has a role in the maturation of mitochondrial aconitase-type and radical-SAM Fe/S proteins biotin synthase and lipoic acid synthase. This is Iron-sulfur cluster assembly factor IBA57, mitochondrial from Saccharomyces cerevisiae (strain ATCC 204508 / S288c) (Baker's yeast).